We begin with the raw amino-acid sequence, 297 residues long: ER membrane protein complex subunit 2-A (297 aa).

3 TPR repeats span residues 87 to 120, 155 to 188, and 192 to 225; these read HRVK…DPTN, QEAW…NPHN, and YQQF…NNHN.

The protein belongs to the EMC2 family. Component of the ER membrane protein complex (EMC).

The protein localises to the endoplasmic reticulum membrane. Its function is as follows. Part of the endoplasmic reticulum membrane protein complex (EMC) that enables the energy-independent insertion into endoplasmic reticulum membranes of newly synthesized membrane proteins. Preferentially accommodates proteins with transmembrane domains that are weakly hydrophobic or contain destabilizing features such as charged and aromatic residues. Involved in the cotranslational insertion of multi-pass membrane proteins in which stop-transfer membrane-anchor sequences become ER membrane spanning helices. It is also required for the post-translational insertion of tail-anchored/TA proteins in endoplasmic reticulum membranes. By mediating the proper cotranslational insertion of N-terminal transmembrane domains in an N-exo topology, with translocated N-terminus in the lumen of the ER, controls the topology of multi-pass membrane proteins. By regulating the insertion of various proteins in membranes, it is indirectly involved in many cellular processes. In Xenopus laevis (African clawed frog), this protein is ER membrane protein complex subunit 2-A (emc2-a).